The following is a 462-amino-acid chain: Tryptophan dimethylallyltransferase ifgA (462 aa).

L-tryptophan-binding positions include 83-84 (IL) and glutamate 92. The substrate site is built by arginine 103, lysine 189, and tyrosine 191. Residues tyrosine 193 and arginine 246 each contribute to the L-tryptophan site. 5 residues coordinate substrate: arginine 259, lysine 261, tyrosine 263, glutamine 345, and tyrosine 347.

The protein belongs to the tryptophan dimethylallyltransferase family. In terms of assembly, homodimer.

The catalysed reaction is L-tryptophan + dimethylallyl diphosphate = 4-(3-methylbut-2-enyl)-L-tryptophan + diphosphate. The protein operates within alkaloid biosynthesis; ergot alkaloid biosynthesis. Functionally, tryptophan dimethylallyltransferase; part of the gene cluster that mediates the biosynthesis of isofumigaclavines, fungal ergot alkaloids. The tryptophan dimethylallyltransferase ifgA catalyzes the first step of ergot alkaloid biosynthesis by condensing dimethylallyl diphosphate (DMAP) and tryptophan to form 4-dimethylallyl-L-tryptophan. The second step is catalyzed by the methyltransferase ifgB that methylates 4-dimethylallyl-L-tryptophan in the presence of S-adenosyl-L-methionine, resulting in the formation of N-methyl-dimethylallyl-L-tryptophan. The catalase ifgD and the FAD-dependent oxidoreductase ifgC then transform N-methyl-dimethylallyl-L-tryptophan to chanoclavine-I which is further oxidized by ifgE in the presence of NAD(+), resulting in the formation of chanoclavine-I aldehyde. The chanoclavine-I aldehyde reductases ifgG and/or fgaOx3 reduce chanoclavine-I aldehyde to dihydrochanoclavine-I aldehyde that spontaneously dehydrates to form 6,8-dimethyl-6,7-didehydroergoline. The festuclavine dehydrogenases ifgF1 and/or ifgF2 then catalyze the reduction of 6,8-dimethyl-6,7-didehydroergoline to form festuclavine. Hydrolysis of festuclavine by a yet undetermined cytochrome P450 monooxygenase (called ifgH) then leads to the formation of isofumigaclavine B which is in turn acetylated by ifgI to isofumigaclavine A. Penicillium roqueforti has interestingly at least two sets of genes for the consumption of chanoclavine-I aldehyde on three different loci, the OYEs ifgG/fgaOx3 and the festuclavine synthase homologs ifgF1/ifgF2. The reason for the duplication of these genes is unclear, probably to ensure the conversion of chanoclavine-I aldehyde by differential gene expression under various environmental conditions. This chain is Tryptophan dimethylallyltransferase ifgA, found in Penicillium roqueforti (strain FM164).